Reading from the N-terminus, the 346-residue chain is Dihydroorotase (346 aa).

Residues His-14 and His-16 each contribute to the Zn(2+) site. Substrate is bound by residues 16–18 (HLR) and Asn-42. Zn(2+) contacts are provided by Lys-100, His-137, and His-175. N6-carboxylysine is present on Lys-100. Residue His-137 coordinates substrate. Leu-220 contributes to the substrate binding site. Asp-248 is a Zn(2+) binding site. Asp-248 is an active-site residue. Positions 252 and 264 each coordinate substrate.

The protein belongs to the metallo-dependent hydrolases superfamily. DHOase family. Class II DHOase subfamily. In terms of assembly, homodimer. Zn(2+) is required as a cofactor.

It carries out the reaction (S)-dihydroorotate + H2O = N-carbamoyl-L-aspartate + H(+). The protein operates within pyrimidine metabolism; UMP biosynthesis via de novo pathway; (S)-dihydroorotate from bicarbonate: step 3/3. Catalyzes the reversible cyclization of carbamoyl aspartate to dihydroorotate. The polypeptide is Dihydroorotase (Novosphingobium aromaticivorans (strain ATCC 700278 / DSM 12444 / CCUG 56034 / CIP 105152 / NBRC 16084 / F199)).